A 100-amino-acid chain; its full sequence is uncharacterized protein (100 aa).

2 helical membrane-spanning segments follow: residues 30–50 (FHIPDFLSFVFPFVASPPLAF) and 69–89 (FLLIVFLFFNLFPTFFFLPFF).

Its subcellular location is the cytoplasm. It localises to the nucleus membrane. This is an uncharacterized protein from Schizosaccharomyces pombe (strain 972 / ATCC 24843) (Fission yeast).